The following is a 424-amino-acid chain: tRNA modification GTPase MnmE (424 aa).

The (6S)-5-formyl-5,6,7,8-tetrahydrofolate site is built by R20, E77, and R117. The 140-residue stretch at 212–351 folds into the TrmE-type G domain; it reads GVRVVFAGPP…LVRDLRDAAR (140 aa). N222 serves as a coordination point for K(+). Residues 222–227, 241–247, and 266–269 contribute to the GTP site; these read NAGKST, SPIAGTT, and DTAG. Mg(2+) is bound at residue S226. Positions 241, 243, and 246 each coordinate K(+). T247 contacts Mg(2+). (6S)-5-formyl-5,6,7,8-tetrahydrofolate is bound at residue K424.

The protein belongs to the TRAFAC class TrmE-Era-EngA-EngB-Septin-like GTPase superfamily. TrmE GTPase family. Homodimer. Heterotetramer of two MnmE and two MnmG subunits. Requires K(+) as cofactor.

It localises to the cytoplasm. In terms of biological role, exhibits a very high intrinsic GTPase hydrolysis rate. Involved in the addition of a carboxymethylaminomethyl (cmnm) group at the wobble position (U34) of certain tRNAs, forming tRNA-cmnm(5)s(2)U34. The protein is tRNA modification GTPase MnmE of Erythrobacter litoralis (strain HTCC2594).